Reading from the N-terminus, the 499-residue chain is UDP-N-acetylmuramoylalanine--D-glutamate ligase (499 aa).

128-134 (GTNGKTT) contributes to the ATP binding site.

It belongs to the MurCDEF family.

The protein localises to the cytoplasm. It catalyses the reaction UDP-N-acetyl-alpha-D-muramoyl-L-alanine + D-glutamate + ATP = UDP-N-acetyl-alpha-D-muramoyl-L-alanyl-D-glutamate + ADP + phosphate + H(+). It participates in cell wall biogenesis; peptidoglycan biosynthesis. Functionally, cell wall formation. Catalyzes the addition of glutamate to the nucleotide precursor UDP-N-acetylmuramoyl-L-alanine (UMA). This is UDP-N-acetylmuramoylalanine--D-glutamate ligase from Rhodococcus jostii (strain RHA1).